The chain runs to 616 residues: Chaperone protein HscA (616 aa).

It belongs to the heat shock protein 70 family.

Functionally, chaperone involved in the maturation of iron-sulfur cluster-containing proteins. Has a low intrinsic ATPase activity which is markedly stimulated by HscB. Involved in the maturation of IscU. This Salmonella heidelberg (strain SL476) protein is Chaperone protein HscA.